Reading from the N-terminus, the 279-residue chain is Shikimate dehydrogenase (NADP(+)) (279 aa).

Residues 21–23 and Thr-68 contribute to the shikimate site; that span reads SKS. Lys-72 functions as the Proton acceptor in the catalytic mechanism. Glu-84 contributes to the NADP(+) binding site. The shikimate site is built by Asn-93 and Asp-109. Residues 133–137, 157–162, and Met-220 each bind NADP(+); these read GAGGA and NRTQAK. Tyr-222 contacts shikimate. Residue Gly-244 coordinates NADP(+).

Belongs to the shikimate dehydrogenase family. As to quaternary structure, homodimer.

The catalysed reaction is shikimate + NADP(+) = 3-dehydroshikimate + NADPH + H(+). The protein operates within metabolic intermediate biosynthesis; chorismate biosynthesis; chorismate from D-erythrose 4-phosphate and phosphoenolpyruvate: step 4/7. Its function is as follows. Involved in the biosynthesis of the chorismate, which leads to the biosynthesis of aromatic amino acids. Catalyzes the reversible NADPH linked reduction of 3-dehydroshikimate (DHSA) to yield shikimate (SA). This chain is Shikimate dehydrogenase (NADP(+)), found in Shewanella halifaxensis (strain HAW-EB4).